Reading from the N-terminus, the 214-residue chain is Calcineurin B homologous protein 3 (214 aa).

The tract at residues 1-20 (MGAAHSASEEVRELEGKTGF) is disordered. A lipid anchor (N-myristoyl glycine) is attached at glycine 2. The segment covering 7–16 (ASEEVRELEG) has biased composition (basic and acidic residues). Residues 110–145 (SRKEKLRFLFHMYDSDSDGRITLEEYRNVVEELLSG) enclose the EF-hand domain. 5 residues coordinate Ca(2+): aspartate 123, aspartate 125, aspartate 127, arginine 129, and glutamate 134.

It belongs to the calcineurin regulatory subunit family. CHP subfamily. As to quaternary structure, monomer. Homodimer; disulfide-linked. Interacts with SLC9A1/NHE1; the interaction enables an optimal Na(+)/H(+) exchange activity. As to expression, expressed in mature megakaryocytes and polymorphonuclear granulocytes (at protein level). Abundantly expressed in heart. Also expressed at a lower level in adult testis and salivary gland, and in the placenta.

The protein resides in the nucleus. It is found in the cytoplasm. It localises to the membrane. The protein localises to the cell membrane. Its subcellular location is the cell projection. The protein resides in the lamellipodium. It is found in the ruffle membrane. Functions as an integral cofactor in cell pH regulation by controlling plasma membrane-type Na(+)/H(+) exchange activity. Promotes the maturation, transport, cell surface stability and exchange activity of SLC9A1/NHE1 at the plasma membrane. Promotes the induction of hematopoietic stem cell differentiation toward megakaryocytic lineage. Essential for the coupling of ERK cascade activation with the expression of ETS family genes in megakaryocytic differentiation. Also involved in granulocytic differentiation in a ERK-dependent manner. Inhibits the phosphatase activity of calcineurin. In Homo sapiens (Human), this protein is Calcineurin B homologous protein 3 (TESC).